Here is a 369-residue protein sequence, read N- to C-terminus: Beta-1,4-galactosyltransferase 2 (369 aa).

Residues 1-15 (MSRLLGGTLERVCKA) lie on the Cytoplasmic side of the membrane. The chain crosses the membrane as a helical; Signal-anchor for type II membrane protein span at residues 16-36 (VLLLCLLHFLVAVILYFDVYA). The Lumenal segment spans residues 37-369 (QHLAFFSRFS…GRPMSWLNQG (333 aa)). Residues 59–75 (SSSTNCSRPNATASSSG) are compositionally biased toward polar residues. The tract at residues 59-90 (SSSTNCSRPNATASSSGLPEVPSARPGPTAPV) is disordered. N-linked (GlcNAc...) asparagine glycosylation is found at asparagine 63 and asparagine 68. Cysteines 94 and 136 form a disulfide. Residues 147–151 (PFRHR), 186–188 (FNR), 214–215 (VD), and tryptophan 275 each bind UDP-alpha-D-galactose. Cysteine 208 and cysteine 227 are joined by a disulfide. Aspartate 215 is a Mn(2+) binding site. Residue 277–280 (GEDD) coordinates N-acetyl-D-glucosamine. Histidine 308 contacts Mn(2+). 308–310 (HDR) is a binding site for UDP-alpha-D-galactose. Arginine 320 is an N-acetyl-D-glucosamine binding site. N-linked (GlcNAc...) asparagine glycosylation occurs at asparagine 354.

It belongs to the glycosyltransferase 7 family. It depends on Mn(2+) as a cofactor.

It localises to the golgi apparatus. The protein localises to the golgi stack membrane. It catalyses the reaction D-glucose + UDP-alpha-D-galactose = lactose + UDP + H(+). The enzyme catalyses an N-acetyl-beta-D-glucosaminyl derivative + UDP-alpha-D-galactose = a beta-D-galactosyl-(1-&gt;4)-N-acetyl-beta-D-glucosaminyl derivative + UDP + H(+). The catalysed reaction is N-acetyl-D-glucosamine + UDP-alpha-D-galactose = beta-D-galactosyl-(1-&gt;4)-N-acetyl-D-glucosamine + UDP + H(+). It participates in protein modification; protein glycosylation. Responsible for the synthesis of complex-type N-linked oligosaccharides in many glycoproteins as well as the carbohydrate moieties of glycolipids. Can produce lactose. In Cricetulus griseus (Chinese hamster), this protein is Beta-1,4-galactosyltransferase 2 (B4GALT2).